A 145-amino-acid polypeptide reads, in one-letter code: Sporulation-specific cell division protein Francci3_3418 (145 aa).

Belongs to the SsgA family.

Its subcellular location is the cell septum. In terms of biological role, involved in sporulation-specific cell division. The polypeptide is Sporulation-specific cell division protein Francci3_3418 (Frankia casuarinae (strain DSM 45818 / CECT 9043 / HFP020203 / CcI3)).